The chain runs to 380 residues: S-adenosylmethionine:tRNA ribosyltransferase-isomerase (380 aa).

Residues 1–15 (MHSKHPTDTARRCET) are compositionally biased toward basic and acidic residues. Residues 1–24 (MHSKHPTDTARRCETGTDSSDTAA) form a disordered region.

The protein belongs to the QueA family. As to quaternary structure, monomer.

Its subcellular location is the cytoplasm. The catalysed reaction is 7-aminomethyl-7-carbaguanosine(34) in tRNA + S-adenosyl-L-methionine = epoxyqueuosine(34) in tRNA + adenine + L-methionine + 2 H(+). It functions in the pathway tRNA modification; tRNA-queuosine biosynthesis. Its function is as follows. Transfers and isomerizes the ribose moiety from AdoMet to the 7-aminomethyl group of 7-deazaguanine (preQ1-tRNA) to give epoxyqueuosine (oQ-tRNA). The sequence is that of S-adenosylmethionine:tRNA ribosyltransferase-isomerase from Oleidesulfovibrio alaskensis (strain ATCC BAA-1058 / DSM 17464 / G20) (Desulfovibrio alaskensis).